We begin with the raw amino-acid sequence, 696 residues long: DEAD-box ATP-dependent RNA helicase 7 (696 aa).

The disordered stretch occupies residues 1–116; that stretch reads MPSLPVAAAE…GDEDPADPNA (116 aa). The stretch at 16-97 forms a coiled coil; that stretch reads ESASKKSKRK…KVVVEEEEED (82 aa). A compositionally biased stretch (basic and acidic residues) spans 27–38; the sequence is KAAEVEVEASSR. Residues 39–49 show a composition bias toward basic residues; the sequence is KKEKKEKKRKA. A compositionally biased stretch (low complexity) spans 67–77; it reads STSSDEPAPAA. Acidic residues predominate over residues 92–112; that stretch reads EEEEEDDDEGELTASGDEDPA. A Q motif motif is present at residues 115–143; the sequence is NALANFRISESLREKLKSKGIKALFPIQA. In terms of domain architecture, Helicase ATP-binding spans 146–328; sequence FDLVLDGHDL…LRFLKSGKKT (183 aa). 159–166 lines the ATP pocket; sequence ARTGQGKT. The short motif at 274–277 is the DEAD box element; that stretch reads DEAD. Residues 357-500 form the Helicase C-terminal domain; sequence QVIPDIIRCY…ISAPQPTDVA (144 aa). The tract at residues 641-696 is disordered; sequence LPPLQEREQSGGSRGGGRFGNRRFSGGGGGRGGGGRGFGGGRGRGGGGGNRFNKRY. The segment covering 652 to 690 has biased composition (gly residues); it reads GSRGGGRFGNRRFSGGGGGRGGGGRGFGGGRGRGGGGGN.

This sequence belongs to the DEAD box helicase family. DDX21/DDX50 subfamily.

Its subcellular location is the nucleus. The enzyme catalyses ATP + H2O = ADP + phosphate + H(+). This is DEAD-box ATP-dependent RNA helicase 7 from Oryza sativa subsp. japonica (Rice).